A 317-amino-acid chain; its full sequence is Adenine deaminase (317 aa).

Zn(2+) is bound by residues H14, H16, and H194. E197 (proton donor) is an active-site residue. D275 contributes to the Zn(2+) binding site. D276 is a binding site for substrate.

Belongs to the metallo-dependent hydrolases superfamily. Adenosine and AMP deaminases family. Adenine deaminase type 2 subfamily. Zn(2+) is required as a cofactor.

The catalysed reaction is adenine + H2O + H(+) = hypoxanthine + NH4(+). Functionally, catalyzes the hydrolytic deamination of adenine to hypoxanthine. Plays an important role in the purine salvage pathway and in nitrogen catabolism. The protein is Adenine deaminase of Pseudomonas syringae pv. tomato (strain ATCC BAA-871 / DC3000).